The chain runs to 355 residues: Iron deficiency-induced protein A (355 aa).

Positions 1–34 (MEKVGRRVFLGMGAAATAYVTHHLWNQNAESSYA) form a signal peptide, tat-type signal. Residues H49, Y50, Y180, Y236, and Y237 each contribute to the Fe cation site.

The protein belongs to the bacterial solute-binding protein 1 family. In terms of processing, predicted to be exported by the Tat system. The position of the signal peptide cleavage has not been experimentally proven.

Its subcellular location is the cellular thylakoid membrane. Functionally, plays an important role in protecting the acceptor side of photosystem II (PSII) against oxidative damage, especially under iron-limiting growth conditions. May also be part of a periplasmic ABC transporter complex involved in iron import. The sequence is that of Iron deficiency-induced protein A (idiA) from Thermosynechococcus vestitus (strain NIES-2133 / IAM M-273 / BP-1).